Here is a 272-residue protein sequence, read N- to C-terminus: Anamorsin homolog (272 aa).

Residues 1–156 form an N-terminal SAM-like domain region; sequence MDSMMNQKTV…KIGSSFALKK (156 aa). The interval 157 to 185 is linker; it reads PVTNLFKIDLDDDVDLIDEDSLLTEEDLM. [2Fe-2S] cluster is bound by residues C195, C202, C205, and C207. The fe-S binding site A stretch occupies residues 195 to 207; it reads CETTKKACKNCVC. [4Fe-4S] cluster is bound by residues C233, C236, C244, and C247. 2 short sequence motifs (cx2C motif) span residues 233–236 and 244–247; these read CGSC and CGTC. Residues 233–247 are fe-S binding site B; that stretch reads CGSCGLGDAFRCGTC.

It belongs to the anamorsin family. Monomer. Interacts with ATR3. Requires [2Fe-2S] cluster as cofactor. [4Fe-4S] cluster serves as cofactor.

It localises to the cytoplasm. The protein resides in the mitochondrion intermembrane space. In terms of biological role, component of the cytosolic iron-sulfur (Fe-S) protein assembly (CIA) machinery. Required for the maturation of extramitochondrial Fe-S proteins. Part of an electron transfer chain functioning in an early step of cytosolic Fe-S biogenesis, facilitating the de novo assembly of a [4Fe-4S] cluster on the cytosolic Fe-S scaffold complex. Electrons are transferred from NADPH via FAD- and FMN-containing diflavin oxidoreductase TAH18/ATR3. Together with the diflavin oxidoreductase, also required for the assembly of the diferric tyrosyl radical cofactor of ribonucleotide reductase (RNR), probably by providing electrons for reduction during radical cofactor maturation in the catalytic small subunit. Required for embryo development. This Arabidopsis thaliana (Mouse-ear cress) protein is Anamorsin homolog.